The sequence spans 210 residues: Dof zinc finger protein DOF4.4 (210 aa).

The Dof-type zinc finger occupies 24-78 (RVCPRCDSDNTKFCFYNNYSESQPRYFCKNCRRYWTHGGALRNIPVGGSCRKPKR). Zn(2+) contacts are provided by Cys26, Cys29, Cys51, and Cys54.

It localises to the nucleus. Functionally, transcription factor that binds specifically to a 5'-AA[AG]G-3' consensus core sequence. This is Dof zinc finger protein DOF4.4 (DOF4.4) from Arabidopsis thaliana (Mouse-ear cress).